A 712-amino-acid chain; its full sequence is Glycine--tRNA ligase beta subunit (712 aa).

This sequence belongs to the class-II aminoacyl-tRNA synthetase family. Tetramer of two alpha and two beta subunits.

It localises to the cytoplasm. The catalysed reaction is tRNA(Gly) + glycine + ATP = glycyl-tRNA(Gly) + AMP + diphosphate. This is Glycine--tRNA ligase beta subunit from Acaryochloris marina (strain MBIC 11017).